The sequence spans 437 residues: Xylose isomerase (437 aa).

Catalysis depends on residues His-101 and Asp-104. 7 residues coordinate Mg(2+): Glu-232, Glu-268, His-271, Asp-296, Asp-307, Asp-309, and Asp-339.

Belongs to the xylose isomerase family. In terms of assembly, homotetramer. The cofactor is Mg(2+).

Its subcellular location is the cytoplasm. The enzyme catalyses alpha-D-xylose = alpha-D-xylulofuranose. This chain is Xylose isomerase, found in Actinobacillus succinogenes (strain ATCC 55618 / DSM 22257 / CCUG 43843 / 130Z).